The primary structure comprises 203 residues: Ribosomal RNA small subunit methyltransferase G (203 aa).

Residues G73, L78, 124–125 (VE), and R138 each bind S-adenosyl-L-methionine.

This sequence belongs to the methyltransferase superfamily. RNA methyltransferase RsmG family.

It is found in the cytoplasm. The catalysed reaction is guanosine(527) in 16S rRNA + S-adenosyl-L-methionine = N(7)-methylguanosine(527) in 16S rRNA + S-adenosyl-L-homocysteine. Specifically methylates the N7 position of guanine in position 527 of 16S rRNA. In Glaesserella parasuis serovar 5 (strain SH0165) (Haemophilus parasuis), this protein is Ribosomal RNA small subunit methyltransferase G.